The sequence spans 179 residues: ATP synthase subunit delta 2 (179 aa).

The protein belongs to the ATPase delta chain family. As to quaternary structure, F-type ATPases have 2 components, F(1) - the catalytic core - and F(0) - the membrane proton channel. F(1) has five subunits: alpha(3), beta(3), gamma(1), delta(1), epsilon(1). F(0) has three main subunits: a(1), b(2) and c(10-14). The alpha and beta chains form an alternating ring which encloses part of the gamma chain. F(1) is attached to F(0) by a central stalk formed by the gamma and epsilon chains, while a peripheral stalk is formed by the delta and b chains.

The protein resides in the cell inner membrane. F(1)F(0) ATP synthase produces ATP from ADP in the presence of a proton or sodium gradient. F-type ATPases consist of two structural domains, F(1) containing the extramembraneous catalytic core and F(0) containing the membrane proton channel, linked together by a central stalk and a peripheral stalk. During catalysis, ATP synthesis in the catalytic domain of F(1) is coupled via a rotary mechanism of the central stalk subunits to proton translocation. In terms of biological role, this protein is part of the stalk that links CF(0) to CF(1). It either transmits conformational changes from CF(0) to CF(1) or is implicated in proton conduction. This chain is ATP synthase subunit delta 2, found in Syntrophotalea carbinolica (strain DSM 2380 / NBRC 103641 / GraBd1) (Pelobacter carbinolicus).